The following is a 702-amino-acid chain: Polyribonucleotide nucleotidyltransferase (702 aa).

Mg(2+) is bound by residues aspartate 485 and aspartate 491. One can recognise a KH domain in the interval 552–612 (PRTEIICIDP…EGVKKAISII (61 aa)). The 69-residue stretch at 622 to 690 (GEIYLGKVTK…NQGRINLSRK (69 aa)) folds into the S1 motif domain.

It belongs to the polyribonucleotide nucleotidyltransferase family. Mg(2+) is required as a cofactor.

It localises to the cytoplasm. It catalyses the reaction RNA(n+1) + phosphate = RNA(n) + a ribonucleoside 5'-diphosphate. In terms of biological role, involved in mRNA degradation. Catalyzes the phosphorolysis of single-stranded polyribonucleotides processively in the 3'- to 5'-direction. The sequence is that of Polyribonucleotide nucleotidyltransferase from Clostridium botulinum (strain ATCC 19397 / Type A).